Here is a 293-residue protein sequence, read N- to C-terminus: 4-hydroxy-tetrahydrodipicolinate synthase (293 aa).

Position 47 (threonine 47) interacts with pyruvate. Tyrosine 136 functions as the Proton donor/acceptor in the catalytic mechanism. Lysine 164 acts as the Schiff-base intermediate with substrate in catalysis. Isoleucine 206 is a pyruvate binding site.

Belongs to the DapA family. In terms of assembly, homotetramer; dimer of dimers.

It localises to the cytoplasm. The enzyme catalyses L-aspartate 4-semialdehyde + pyruvate = (2S,4S)-4-hydroxy-2,3,4,5-tetrahydrodipicolinate + H2O + H(+). It participates in amino-acid biosynthesis; L-lysine biosynthesis via DAP pathway; (S)-tetrahydrodipicolinate from L-aspartate: step 3/4. In terms of biological role, catalyzes the condensation of (S)-aspartate-beta-semialdehyde [(S)-ASA] and pyruvate to 4-hydroxy-tetrahydrodipicolinate (HTPA). In Listeria monocytogenes serotype 4a (strain HCC23), this protein is 4-hydroxy-tetrahydrodipicolinate synthase.